The chain runs to 744 residues: Catalase-peroxidase (744 aa).

The tryptophyl-tyrosyl-methioninium (Trp-Tyr) (with M-257) cross-link spans 108–231; that stretch reads WHSAGTYRIS…LAAVQMGLIY (124 aa). H109 serves as the catalytic Proton acceptor. Positions 231–257 form a cross-link, tryptophyl-tyrosyl-methioninium (Tyr-Met) (with W-108); that stretch reads YVNPEGPNGNPDPIAAARDIRETFRRM. Heme b is bound at residue H272. Positions 353–372 are disordered; sequence ANQWKPKDGAGAGTVPDAHD.

The protein belongs to the peroxidase family. Peroxidase/catalase subfamily. In terms of assembly, homodimer or homotetramer. Requires heme b as cofactor. In terms of processing, formation of the three residue Trp-Tyr-Met cross-link is important for the catalase, but not the peroxidase activity of the enzyme.

The catalysed reaction is H2O2 + AH2 = A + 2 H2O. The enzyme catalyses 2 H2O2 = O2 + 2 H2O. Its function is as follows. Bifunctional enzyme with both catalase and broad-spectrum peroxidase activity. This Frankia casuarinae (strain DSM 45818 / CECT 9043 / HFP020203 / CcI3) protein is Catalase-peroxidase.